We begin with the raw amino-acid sequence, 178 residues long: Acireductone dioxygenase (178 aa).

Residues His-100, His-102, Glu-106, and His-145 each coordinate Fe(2+). Residues His-100, His-102, Glu-106, and His-145 each coordinate Ni(2+).

Belongs to the acireductone dioxygenase (ARD) family. Monomer. Fe(2+) is required as a cofactor. It depends on Ni(2+) as a cofactor.

The enzyme catalyses 1,2-dihydroxy-5-(methylsulfanyl)pent-1-en-3-one + O2 = 3-(methylsulfanyl)propanoate + CO + formate + 2 H(+). It carries out the reaction 1,2-dihydroxy-5-(methylsulfanyl)pent-1-en-3-one + O2 = 4-methylsulfanyl-2-oxobutanoate + formate + 2 H(+). Its pathway is amino-acid biosynthesis; L-methionine biosynthesis via salvage pathway; L-methionine from S-methyl-5-thio-alpha-D-ribose 1-phosphate: step 5/6. Functionally, catalyzes 2 different reactions between oxygen and the acireductone 1,2-dihydroxy-3-keto-5-methylthiopentene (DHK-MTPene) depending upon the metal bound in the active site. Fe-containing acireductone dioxygenase (Fe-ARD) produces formate and 2-keto-4-methylthiobutyrate (KMTB), the alpha-ketoacid precursor of methionine in the methionine recycle pathway. Ni-containing acireductone dioxygenase (Ni-ARD) produces methylthiopropionate, carbon monoxide and formate, and does not lie on the methionine recycle pathway. In Bacillus velezensis (strain DSM 23117 / BGSC 10A6 / LMG 26770 / FZB42) (Bacillus amyloliquefaciens subsp. plantarum), this protein is Acireductone dioxygenase.